The primary structure comprises 264 residues: Glutamate racemase (264 aa).

Substrate contacts are provided by residues 10–11 (DS) and 42–43 (YG). The active-site Proton donor/acceptor is the Cys-73. 74-75 (NT) is a substrate binding site. Residue Cys-183 is the Proton donor/acceptor of the active site. 184–185 (TH) contacts substrate.

The protein belongs to the aspartate/glutamate racemases family.

It carries out the reaction L-glutamate = D-glutamate. The protein operates within cell wall biogenesis; peptidoglycan biosynthesis. Provides the (R)-glutamate required for cell wall biosynthesis. The sequence is that of Glutamate racemase from Streptococcus suis (strain 98HAH33).